A 573-amino-acid polypeptide reads, in one-letter code: 2-succinyl-5-enolpyruvyl-6-hydroxy-3-cyclohexene-1-carboxylate synthase (573 aa).

It belongs to the TPP enzyme family. MenD subfamily. Homodimer. Requires Mg(2+) as cofactor. Mn(2+) serves as cofactor. Thiamine diphosphate is required as a cofactor.

It catalyses the reaction isochorismate + 2-oxoglutarate + H(+) = 5-enolpyruvoyl-6-hydroxy-2-succinyl-cyclohex-3-ene-1-carboxylate + CO2. The protein operates within quinol/quinone metabolism; 1,4-dihydroxy-2-naphthoate biosynthesis; 1,4-dihydroxy-2-naphthoate from chorismate: step 2/7. It functions in the pathway quinol/quinone metabolism; menaquinone biosynthesis. Functionally, catalyzes the thiamine diphosphate-dependent decarboxylation of 2-oxoglutarate and the subsequent addition of the resulting succinic semialdehyde-thiamine pyrophosphate anion to isochorismate to yield 2-succinyl-5-enolpyruvyl-6-hydroxy-3-cyclohexene-1-carboxylate (SEPHCHC). The sequence is that of 2-succinyl-5-enolpyruvyl-6-hydroxy-3-cyclohexene-1-carboxylate synthase from Shewanella baltica (strain OS195).